A 160-amino-acid chain; its full sequence is Cytochrome b6-f complex subunit 4 (160 aa).

3 helical membrane passes run Leu-36–Val-56, Leu-95–Glu-115, and Leu-131–Ile-151.

It belongs to the cytochrome b family. PetD subfamily. The 4 large subunits of the cytochrome b6-f complex are cytochrome b6, subunit IV (17 kDa polypeptide, petD), cytochrome f and the Rieske protein, while the 4 small subunits are petG, petL, petM and petN. The complex functions as a dimer.

The protein localises to the plastid. It localises to the chloroplast thylakoid membrane. Functionally, component of the cytochrome b6-f complex, which mediates electron transfer between photosystem II (PSII) and photosystem I (PSI), cyclic electron flow around PSI, and state transitions. This Emiliania huxleyi (Coccolithophore) protein is Cytochrome b6-f complex subunit 4.